Reading from the N-terminus, the 248-residue chain is Cutinase cut1 (248 aa).

The first 17 residues, 1 to 17, serve as a signal peptide directing secretion; the sequence is MRSLSLFTALLAGQAFA. Cysteine 79 and cysteine 153 are disulfide-bonded. The active-site Nucleophile is the serine 164. A disulfide bond links cysteine 212 and cysteine 219. Residue aspartate 216 is part of the active site. The Proton donor/acceptor role is filled by histidine 229.

It belongs to the cutinase family. The 2 disulfide bonds play a critical role in holding the catalytic residues in juxta-position; reduction of the disulfide bridges results in the complete inactivation of the enzyme.

It is found in the secreted. The catalysed reaction is cutin + H2O = cutin monomers.. In terms of biological role, catalyzes the hydrolysis of complex carboxylic polyesters found in the cell wall of plants. May degrade cutin, a macromolecule that forms the structure of the plant cuticle. May also degrade suberin, a specialized macromolecule found in the cell wall of various plant tissues. The polypeptide is Cutinase cut1 (Trichoderma harzianum (Hypocrea lixii)).